Consider the following 262-residue polypeptide: Phosphatidylglycerol--prolipoprotein diacylglyceryl transferase (262 aa).

The next 4 helical transmembrane spans lie at 9 to 29, 41 to 61, 80 to 100, and 109 to 129; these read LGPLAIRWYALCIVTGLILAV, IIPDDILDFILVAFPLAILGA, IFAIWNGGLAIYGGLITGALV, and LINTWDFLDIAAPSVMIAQSL. A 1,2-diacyl-sn-glycero-3-phospho-(1'-sn-glycerol) is bound at residue R131. 3 consecutive transmembrane segments (helical) span residues 167-187, 197-217, and 226-246; these read QPTFLYESLWNLLGFALILIF, GHITAFYLIWYGFGRMVIEGM, and GFRVSQWLSVVLIGLGIMIVI.

The protein belongs to the Lgt family.

It localises to the cell membrane. The catalysed reaction is L-cysteinyl-[prolipoprotein] + a 1,2-diacyl-sn-glycero-3-phospho-(1'-sn-glycerol) = an S-1,2-diacyl-sn-glyceryl-L-cysteinyl-[prolipoprotein] + sn-glycerol 1-phosphate + H(+). It participates in protein modification; lipoprotein biosynthesis (diacylglyceryl transfer). Catalyzes the transfer of the diacylglyceryl group from phosphatidylglycerol to the sulfhydryl group of the N-terminal cysteine of a prolipoprotein, the first step in the formation of mature lipoproteins. This chain is Phosphatidylglycerol--prolipoprotein diacylglyceryl transferase, found in Streptococcus pneumoniae serotype 4 (strain ATCC BAA-334 / TIGR4).